Here is a 359-residue protein sequence, read N- to C-terminus: MENKKVIVGISGGVDSSVSALLLKQQGYDVTGVFMKNWEEDDTDEFCSAEQDIADAQAVCDSIGIPFKKINFAAEYWDNVFEHFLIKYKAGRTPNPDILCNKEIKFKAFLSYVHLLGGDYIATGHYAQTRLAADGSVQLVKGLDDNKDQTYFLYTLGQEQLRQTIFPIGNIEKSKVREIAKENNLVTFDKKDSTGICFIGERKFKEFLSKYLPAQKGEIHDENGIKIGMHDGLMYYTIGQRQGLGIGGVKDRPEVPWFAAKKDLENNVLIAVQGHDHPLLFKQSLQAIELSWVAGMAPADKFRCAAKVRYRQKDQSCEVEVNQDGSVNVTFDQPQRAITPGQSVVFYIDDVCLGGGVII.

ATP contacts are provided by residues 9–16 and Met-35; that span reads GISGGVDS. Positions 95-97 are interaction with target base in tRNA; the sequence is NPD. Cys-100 acts as the Nucleophile in catalysis. The cysteines at positions 100 and 197 are disulfide-linked. Residue Gly-124 coordinates ATP. An interaction with tRNA region spans residues 147–149; sequence KDQ. The active-site Cysteine persulfide intermediate is the Cys-197. Residues 309-310 are interaction with tRNA; that stretch reads RY.

The protein belongs to the MnmA/TRMU family.

It localises to the cytoplasm. It carries out the reaction S-sulfanyl-L-cysteinyl-[protein] + uridine(34) in tRNA + AH2 + ATP = 2-thiouridine(34) in tRNA + L-cysteinyl-[protein] + A + AMP + diphosphate + H(+). Its function is as follows. Catalyzes the 2-thiolation of uridine at the wobble position (U34) of tRNA, leading to the formation of s(2)U34. This is tRNA-specific 2-thiouridylase MnmA from Francisella tularensis subsp. tularensis (strain WY96-3418).